The following is a 234-amino-acid chain: Peptidase E (234 aa).

Catalysis depends on charge relay system residues Ser123, Asp138, and His160.

It belongs to the peptidase S51 family.

Its subcellular location is the cytoplasm. The enzyme catalyses Dipeptidase E catalyzes the hydrolysis of dipeptides Asp-|-Xaa. It does not act on peptides with N-terminal Glu, Asn or Gln, nor does it cleave isoaspartyl peptides.. Its function is as follows. Hydrolyzes dipeptides containing N-terminal aspartate residues. May play a role in allowing the cell to use peptide aspartate to spare carbon otherwise required for the synthesis of the aspartate family of amino acids. This is Peptidase E from Actinobacillus pleuropneumoniae serotype 5b (strain L20).